A 428-amino-acid polypeptide reads, in one-letter code: Zinc-type alcohol dehydrogenase B (428 aa).

Residues C116, H137, C167, C170, C173, and C181 each contribute to the Zn(2+) site. Position 393 is an N6-benzoyllysine (K393).

This sequence belongs to the zinc-containing alcohol dehydrogenase family. Class-III subfamily. Homodimer. The cofactor is Zn(2+). In terms of processing, benzoylation at lys-393 by gcnE leads to the activation od adhB.

The catalysed reaction is a primary alcohol + NAD(+) = an aldehyde + NADH + H(+). The enzyme catalyses a secondary alcohol + NAD(+) = a ketone + NADH + H(+). In terms of biological role, zinc-type alcohol dehydrogenase involved in development, secondary metabolism, pathogenicity, and stress response. Specifically controls the formation of sclerotia and the biosynthesis of aflatoxin. Contribute to seed colonization of A flavus on host maize seed. This Aspergillus flavus (strain ATCC 200026 / FGSC A1120 / IAM 13836 / NRRL 3357 / JCM 12722 / SRRC 167) protein is Zinc-type alcohol dehydrogenase B.